The chain runs to 120 residues: Large ribosomal subunit protein bL17 (120 aa).

The protein belongs to the bacterial ribosomal protein bL17 family. As to quaternary structure, part of the 50S ribosomal subunit. Contacts protein L32.

In Mesomycoplasma hyopneumoniae (strain J / ATCC 25934 / NCTC 10110) (Mycoplasma hyopneumoniae), this protein is Large ribosomal subunit protein bL17.